Consider the following 565-residue polypeptide: Sodium/hydrogen exchanger 9B1 (565 aa).

Composition is skewed to basic and acidic residues over residues 1 to 14 and 23 to 86; these read MSEH…KDDG and MSKD…ETQT. A disordered region spans residues 1-112; it reads MSEHDVESNK…RGTNSYCPPQ (112 aa). A run of 13 helical transmembrane segments spans residues 122–142, 146–166, 167–187, 206–223, 238–258, 266–286, 311–331, 341–361, 371–391, 419–439, 449–469, 482–502, and 523–543; these read GAAL…EVLP, LFGL…LEFI, KIPV…GFTI, ALRN…GLGL, LSFG…HFIM, FLLG…NMLM, IVAI…GSVI, VLIG…FPSG, AFLV…IGLH, IVAN…GTEV, IGMC…STFV, VFIA…GPLA, and VAFL…GILG.

This sequence belongs to the monovalent cation:proton antiporter 1 (CPA1) transporter (TC 2.A.36) family. Testis-specific. Expressed in the spermatids and spermatozoa (at protein level). Specifically present in the principal piece of sperm tail (at protein level).

The protein localises to the cell projection. Its subcellular location is the cilium. The protein resides in the flagellum membrane. Its function is as follows. Sperm-specific Na(+)/H(+) exchanger involved in intracellular pH regulation of spermatozoa. Involved in sperm motility and fertility. This Mus musculus (Mouse) protein is Sodium/hydrogen exchanger 9B1.